We begin with the raw amino-acid sequence, 347 residues long: Sensor protein VraS (347 aa).

Transmembrane regions (helical) follow at residues I13–I33 and I43–V63. The Histidine kinase domain maps to R150–K341. Residue H156 is modified to Phosphohistidine.

Post-translationally, autophosphorylated on His-156.

It is found in the cell membrane. The catalysed reaction is ATP + protein L-histidine = ADP + protein N-phospho-L-histidine.. Member of the two-component regulatory system PprA/PprB involved in biofilm formation by controlling the expression of many related genes including type IVb pili major subunit flp pilin, adhesin bapA or cupE fimbriae. Also modulates quorum-sensing signal production acting on both negative and positive modulators. Functions as a heme sensor histidine kinase which is autophosphorylated at a histidine residue and transfers its phosphate group to PprB. The protein is Sensor protein VraS (vraS) of Staphylococcus aureus (strain COL).